A 901-amino-acid polypeptide reads, in one-letter code: Protein translocase subunit SecA (901 aa).

ATP-binding positions include Q85, 103 to 107 (GEGKT), and D492. The disordered stretch occupies residues 828 to 901 (GLVTDDGGNP…PKNRRNKKRR (74 aa)). Residues 871–881 (DGQKPRGEGNR) show a composition bias toward basic and acidic residues. The span at 882-901 (AARRSAASKKPKNRRNKKRR) shows a compositional bias: basic residues.

It belongs to the SecA family. As to quaternary structure, monomer and homodimer. Part of the essential Sec protein translocation apparatus which comprises SecA, SecYEG and auxiliary proteins SecDF. Other proteins may also be involved.

Its subcellular location is the cell membrane. It localises to the cytoplasm. It carries out the reaction ATP + H2O + cellular proteinSide 1 = ADP + phosphate + cellular proteinSide 2.. In terms of biological role, part of the Sec protein translocase complex. Interacts with the SecYEG preprotein conducting channel. Has a central role in coupling the hydrolysis of ATP to the transfer of proteins into and across the cell membrane, serving as an ATP-driven molecular motor driving the stepwise translocation of polypeptide chains across the membrane. In Cutibacterium acnes (strain DSM 16379 / KPA171202) (Propionibacterium acnes), this protein is Protein translocase subunit SecA.